Reading from the N-terminus, the 663-residue chain is MAKRNRSQFRIQERTAKKRKHEDSLLEGNVFQNAPEDMDENTIYSAKGSSWDEEEQDYEMVPRKNRSDTSNLVEGLPIKVNGKVERKLHKAQEKPKDDDEEDEDSNDSSEDDEGPNEEQEAEAKEDEPDTEEKILQLKEDIADLVTKVMEEPEENTAALGRLCKMVESKNPNTCKFSMLALVPVFKSIIPGYRIRPLTETEKKEKVSKEVSKLRNFEQALVYNYKNYVGRLQSLSKTPSNAAPIQVSLGILATQAAKELISTASHFNFRTDIFTLLLRRICKPRISTDPTSIQIIQTFETLLNEDEEGSISFEILRIFNKILKTRNFNIEESVLNMLLSLDVLHDYDPNTKLKGNVSAPKLKKKDRVHLSKKQRKARKEMQQIEEEMRNAEQAVSAEERERNQSEILKIVFTIYLNILKNNAKTLIGSVLEGLTKFGNMANFDLLGDFLEVMKELISDTEFDNLSSAEVRKALLCIVSAFSLISNTQYMKVNVDLSKFVDGLYALLPYICLDADIELSYRSLRLADPLNNEIIKPSVNVSTKAELLLKALDHVFFRSKSGTKERATAFTKRLYMCISHTPEKTSIAILKFIDKLMNRYPEISGLYSSEDRIGNGHFIMEADNPSRSNPEAATLWDNALLEKHYCPVVTKGLRSLSSRSKECSK.

The segment at M1–E132 is disordered. Basic and acidic residues predominate over residues G82 to D97. Residues D98–T130 are compositionally biased toward acidic residues. Positions K363–K408 form a coiled coil. At S395 the chain carries Phosphoserine.

The protein belongs to the CBF/MAK21 family. Forms a heterodimer with NOC2. This complex may be associated with pre-ribosomal particles. Also interacts with MCM2, MCM5 and ORC1.

Its subcellular location is the nucleus. It is found in the nucleolus. In terms of biological role, required for synthesis of 60S ribosomal subunits and the transport of pre-ribosomes from the nucleoplasm to the cytoplasm. Also required for initiation of DNA replication. May function downstream of the origin recognition complex (ORC complex) in the loading of CDC6 and the minichromosome maintenance complex (MCM complex) onto chromatin during the G1 phase of the cell cycle. Essential for growth. This chain is Nucleolar complex-associated protein 3 (NOC3), found in Saccharomyces cerevisiae (strain ATCC 204508 / S288c) (Baker's yeast).